We begin with the raw amino-acid sequence, 149 residues long: Deoxyuridine 5'-triphosphate nucleotidohydrolase (149 aa).

Substrate contacts are provided by residues 68-70 (RSG), Asn81, 85-87 (TVD), and Lys95.

This sequence belongs to the dUTPase family. Mg(2+) is required as a cofactor.

The enzyme catalyses dUTP + H2O = dUMP + diphosphate + H(+). It functions in the pathway pyrimidine metabolism; dUMP biosynthesis; dUMP from dCTP (dUTP route): step 2/2. Functionally, this enzyme is involved in nucleotide metabolism: it produces dUMP, the immediate precursor of thymidine nucleotides and it decreases the intracellular concentration of dUTP so that uracil cannot be incorporated into DNA. The protein is Deoxyuridine 5'-triphosphate nucleotidohydrolase of Neorickettsia sennetsu (strain ATCC VR-367 / Miyayama) (Ehrlichia sennetsu).